Reading from the N-terminus, the 121-residue chain is Large ribosomal subunit protein uL18 (121 aa).

The protein belongs to the universal ribosomal protein uL18 family. Part of the 50S ribosomal subunit; part of the 5S rRNA/L5/L18/L25 subcomplex. Contacts the 5S and 23S rRNAs.

This is one of the proteins that bind and probably mediate the attachment of the 5S RNA into the large ribosomal subunit, where it forms part of the central protuberance. This is Large ribosomal subunit protein uL18 from Burkholderia mallei (strain NCTC 10247).